The sequence spans 118 residues: Large ribosomal subunit protein uL18 (118 aa).

Belongs to the universal ribosomal protein uL18 family. In terms of assembly, part of the 50S ribosomal subunit; part of the 5S rRNA/L5/L18/L25 subcomplex. Contacts the 5S and 23S rRNAs.

Its function is as follows. This is one of the proteins that bind and probably mediate the attachment of the 5S RNA into the large ribosomal subunit, where it forms part of the central protuberance. This is Large ribosomal subunit protein uL18 from Zymomonas mobilis subsp. mobilis (strain ATCC 31821 / ZM4 / CP4).